We begin with the raw amino-acid sequence, 472 residues long: Protein translocase subunit SecD (472 aa).

6 consecutive transmembrane segments (helical) span residues 8-28 (ILFTVIVFVFALLGLILPLSG), 300-320 (TIINAGIIGLIIVMIYMIIFY), 325-347 (VIADIALIYNTFLLMGILSWTGA), 353-375 (GIAGIILTFGTTVDGNIIIYERI), 396-416 (VFSTIFDANITTILAGLVLFF), and 424-444 (GFAVTLIIGVLGAMFTNLVVS).

This sequence belongs to the SecD/SecF family. SecD subfamily. In terms of assembly, forms a complex with SecF. Part of the essential Sec protein translocation apparatus which comprises SecA, SecYEG and auxiliary proteins SecDF. Other proteins may also be involved.

It is found in the cell inner membrane. Its function is as follows. Part of the Sec protein translocase complex. Interacts with the SecYEG preprotein conducting channel. SecDF uses the proton motive force (PMF) to complete protein translocation after the ATP-dependent function of SecA. The sequence is that of Protein translocase subunit SecD from Petrotoga mobilis (strain DSM 10674 / SJ95).